A 211-amino-acid polypeptide reads, in one-letter code: Methylthioribulose-1-phosphate dehydratase (211 aa).

Histidine 97 and histidine 99 together coordinate Zn(2+).

This sequence belongs to the aldolase class II family. MtnB subfamily. As to quaternary structure, homotetramer. Requires Zn(2+) as cofactor.

The enzyme catalyses 5-(methylsulfanyl)-D-ribulose 1-phosphate = 5-methylsulfanyl-2,3-dioxopentyl phosphate + H2O. Its pathway is amino-acid biosynthesis; L-methionine biosynthesis via salvage pathway; L-methionine from S-methyl-5-thio-alpha-D-ribose 1-phosphate: step 2/6. Catalyzes the dehydration of methylthioribulose-1-phosphate (MTRu-1-P) into 2,3-diketo-5-methylthiopentyl-1-phosphate (DK-MTP-1-P). This Geobacillus thermodenitrificans (strain NG80-2) protein is Methylthioribulose-1-phosphate dehydratase.